A 490-amino-acid polypeptide reads, in one-letter code: Tektin-3 (490 aa).

Thr-7, Thr-9, and Thr-11 each carry an O-linked (GalNAc...) threonine glycan. 4 N-linked (GlcNAc...) asparagine glycosylation sites follow: Asn-41, Asn-86, Asn-111, and Asn-276. The stretch at Met-415–Val-461 forms a coiled coil.

The protein belongs to the tektin family. As to quaternary structure, microtubule inner protein component of sperm flagellar doublet microtubules. Interacts with TEKT1, TEKT2, TEKT4 and TEKT5. Interacts with CCDC38. Post-translationally, N- and O-glycosylated. In terms of processing, ubiquitinated, leading to its degradation. Deubiquitinated by USP16, promoting its stability. May be proteolytically processed during the epididymal transit of spermatozoa. In terms of tissue distribution, expressed preferentially in testis. Expressed predominantly in late pachytene spermatocytes and early round spermatids. Expressed in spermatozoa.

The protein localises to the cytoplasm. It localises to the cytoskeleton. The protein resides in the cilium axoneme. Its subcellular location is the flagellum axoneme. It is found in the cytoplasmic vesicle. The protein localises to the secretory vesicle. It localises to the acrosome outer membrane. Functionally, microtubule inner protein (MIP) part of the dynein-decorated doublet microtubules (DMTs) in cilia and flagellar axoneme. Forms filamentous polymers in the walls of ciliary and flagellar microtubules. Required for normal sperm mobility. The sequence is that of Tektin-3 (Tekt3) from Mus musculus (Mouse).